The primary structure comprises 533 residues: Spindle pole body protein CSA6 (533 aa).

Disordered regions lie at residues 1–32 (MEDS…SDLT) and 53–130 (DKYD…QEDE). Composition is skewed to basic and acidic residues over residues 18 to 30 (PEIK…KTSD) and 53 to 68 (DKYD…DLTP). Over residues 83–94 (PSKFSSSIPQKP) the composition is skewed to low complexity. Positions 103-121 (SSPTKNYTDHINQLRSGPN) are enriched in polar residues. Positions 136–236 (KYEIKRLKQE…RSERDELVKD (101 aa)) form a coiled coil. Residues 309 to 318 (EKDKPSEDKT) show a composition bias toward basic and acidic residues. Disordered stretches follow at residues 309–329 (EKDK…SKDA) and 349–453 (SANS…QSTK). Composition is skewed to polar residues over residues 349–392 (SANS…SNSQ) and 405–421 (IYSS…QSSH). Over residues 432-445 (PRVERDHWTDRPPS) the composition is skewed to basic and acidic residues.

The protein localises to the cytoplasm. Its subcellular location is the cytoskeleton. The protein resides in the microtubule organizing center. It localises to the spindle pole body. Plays a role in mitotic spindle pole body organization, possibly at the point of spindle pole body separation. Required for mitotic exit. In Candida dubliniensis (strain CD36 / ATCC MYA-646 / CBS 7987 / NCPF 3949 / NRRL Y-17841) (Yeast), this protein is Spindle pole body protein CSA6.